Consider the following 750-residue polypeptide: 5-methyltetrahydropteroyltriglutamate--homocysteine methyltransferase (750 aa).

5-methyltetrahydropteroyltri-L-glutamate-binding positions include 15-18 (RELK) and K114. L-homocysteine contacts are provided by residues 425–427 (IGS) and E478. L-methionine is bound by residues 425–427 (IGS) and E478. Position 555 (W555) interacts with 5-methyltetrahydropteroyltri-L-glutamate. Residue D593 participates in L-homocysteine binding. Position 593 (D593) interacts with L-methionine. E599 lines the 5-methyltetrahydropteroyltri-L-glutamate pocket. Residues H636, C638, and E660 each contribute to the Zn(2+) site. Catalysis depends on H689, which acts as the Proton donor. Residue C721 coordinates Zn(2+).

Belongs to the vitamin-B12 independent methionine synthase family. Zn(2+) is required as a cofactor.

It carries out the reaction 5-methyltetrahydropteroyltri-L-glutamate + L-homocysteine = tetrahydropteroyltri-L-glutamate + L-methionine. It participates in amino-acid biosynthesis; L-methionine biosynthesis via de novo pathway; L-methionine from L-homocysteine (MetE route): step 1/1. Functionally, catalyzes the transfer of a methyl group from 5-methyltetrahydrofolate to homocysteine resulting in methionine formation. This is 5-methyltetrahydropteroyltriglutamate--homocysteine methyltransferase from Streptococcus gordonii (strain Challis / ATCC 35105 / BCRC 15272 / CH1 / DL1 / V288).